The sequence spans 496 residues: 1-aminocyclopropane-1-carboxylate synthase 2 (496 aa).

Substrate contacts are provided by E55 and Y93. The residue at position 279 (K279) is an N6-(pyridoxal phosphate)lysine. A phosphoserine mark is found at S483, S488, and S491.

The protein belongs to the class-I pyridoxal-phosphate-dependent aminotransferase family. Homodimer and heterodimer. In vivo, the relevance of heterodimerization with other ACS enzymes is however unsure. Interacts with GRF3. Requires pyridoxal 5'-phosphate as cofactor. In terms of processing, phosphorylated on serine residue by MAP kinase (MPK6). Post-translationally, may be processed at its C-terminus. In terms of tissue distribution, high in developing leaves and in flowers. Expressed in roots and siliques.

The catalysed reaction is S-adenosyl-L-methionine = 1-aminocyclopropane-1-carboxylate + S-methyl-5'-thioadenosine + H(+). The protein operates within alkene biosynthesis; ethylene biosynthesis via S-adenosyl-L-methionine; ethylene from S-adenosyl-L-methionine: step 1/2. Its function is as follows. 1-aminocyclopropane-1-carboxylate synthase (ACS) enzymes catalyze the conversion of S-adenosyl-L-methionine (SAM) into 1-aminocyclopropane-1-carboxylate (ACC), a direct precursor of ethylene. The protein is 1-aminocyclopropane-1-carboxylate synthase 2 (ACS2) of Arabidopsis thaliana (Mouse-ear cress).